Consider the following 254-residue polypeptide: uncharacterized protein (254 aa).

Val-7 and Asn-85 together coordinate NADP(+). Ser-136 functions as the Proton donor in the catalytic mechanism. Tyr-150, Lys-154, Val-181, and Thr-183 together coordinate NADP(+). Tyr-150 (proton acceptor) is an active-site residue. The active-site Lowers pKa of active site Tyr is Lys-154.

It belongs to the short-chain dehydrogenases/reductases (SDR) family.

This is an uncharacterized protein from Saccharomyces cerevisiae (strain ATCC 204508 / S288c) (Baker's yeast).